The sequence spans 288 residues: Homoserine kinase (288 aa).

79–89 contacts ATP; that stretch reads PPARGLGSSSA.

It belongs to the GHMP kinase family. Homoserine kinase subfamily.

The protein resides in the cytoplasm. It catalyses the reaction L-homoserine + ATP = O-phospho-L-homoserine + ADP + H(+). It functions in the pathway amino-acid biosynthesis; L-threonine biosynthesis; L-threonine from L-aspartate: step 4/5. Its function is as follows. Catalyzes the ATP-dependent phosphorylation of L-homoserine to L-homoserine phosphate. The sequence is that of Homoserine kinase from Listeria innocua serovar 6a (strain ATCC BAA-680 / CLIP 11262).